The following is a 1978-amino-acid chain: Sodium channel protein type 8 subunit alpha (1978 aa).

2 disordered regions span residues 1–20 (MAAR…FTPE) and 28–62 (RIAE…LEAG). At 1–132 (MAARVLAPPG…RIAIKILIHS (132 aa)) the chain is on the cytoplasmic side. Residues 28–61 (RIAESKLKKPPKADGSHREDDEDSKPKPNSDLEA) show a composition bias toward basic and acidic residues. The I repeat unit spans residues 114 to 442 (ILSPFNLIRR…KAMLEQLKKQ (329 aa)). A helical transmembrane segment spans residues 133–151 (VFSMIIMCTILTNCVFMTF). Topologically, residues 152-158 (SNPPEWS) are extracellular. Residues 159 to 179 (KNVEYTFTGIYTFESLVKIIA) form a helical membrane-spanning segment. The Cytoplasmic segment spans residues 180 to 193 (RGFCIDGFTFLRDP). The chain crosses the membrane as a helical span at residues 194–211 (WNWLDFSVIMMAYVTEFV). Residues 212 to 217 (DLGNVS) are Extracellular-facing. N215 carries N-linked (GlcNAc...) asparagine glycosylation. A helical transmembrane segment spans residues 218-234 (ALRTFRVLRALKTISVI). Over 235–253 (PGLKTIVGALIQSVKKLSD) the chain is Cytoplasmic. A helical membrane pass occupies residues 254 to 273 (VMILTVFCLSVFALIGLQLF). The Extracellular portion of the chain corresponds to 274–355 (MGNLRNKCVV…PNYGYTSFDT (82 aa)). C281 and C333 form a disulfide bridge. N289, N295, N308, and N326 each carry an N-linked (GlcNAc...) asparagine glycan. Residues 356-380 (FSWAFLALFRLMTQDYWENLYQLTL) constitute an intramembrane region (pore-forming). Na(+) is bound at residue E373. Over 381–387 (RAAGKTY) the chain is Extracellular. The helical transmembrane segment at 388-408 (MIFFVLVIFVGSFYLVNLILA) threads the bilayer. Over 409–751 (VVAMAYEEQN…EIVNLIVMDP (343 aa)) the chain is Cytoplasmic. 2 disordered regions span residues 446–530 (AQAA…KAFR) and 576–597 (DPGS…SEGR). Low complexity predominate over residues 473-486 (SPRSSSELSKLSSK). Over residues 489–500 (KERRNRRKKRKQ) the composition is skewed to basic residues. Basic and acidic residues-rich tracts occupy residues 501 to 530 (KELS…KAFR) and 586 to 597 (DEHSTVEESEGR). Residues S518 and S520 each carry the phosphoserine modification. An II repeat occupies 733 to 1005 (CHPYWIKLKE…QISVIRIKKG (273 aa)). A helical membrane pass occupies residues 752-770 (FVDLAITICIVLNTLFMAM). Topologically, residues 771–781 (EHHPMTPQFEH) are extracellular. A helical membrane pass occupies residues 782-801 (VLAVGNLVFTGIFTAEMFLK). Residues 802-815 (LIAMDPYYYFQEGW) are Cytoplasmic-facing. Residues 816–835 (NIFDGFIVSLSLMELGLADV) form a helical membrane-spanning segment. The Extracellular segment spans residues 836–837 (EG). The chain crosses the membrane as a helical span at residues 838–855 (LSVLRSFRLLRVFKLAKS). Residues 856–871 (WPTLNMLIKIIGNSVG) lie on the Cytoplasmic side of the membrane. Residues 872–890 (ALGNLTLVLAIIVFIFAVV) traverse the membrane as a helical segment. Residues 891–919 (GMQLFGKSYKECVCKISQECKLPRWHMND) lie on the Extracellular side of the membrane. A disulfide bridge links C904 with C910. Positions 920–940 (FFHSFLIVFRVLCGEWIETMW) form an intramembrane region, pore-forming. E934 and E937 together coordinate Na(+). The Extracellular portion of the chain corresponds to 941–953 (DCMEVAGQAMCLI). C942 and C951 form a disulfide bridge. The chain crosses the membrane as a helical span at residues 954 to 974 (VFMMVMVIGNLVVLNLFLALL). Residues 975 to 1197 (LSSFSADNLA…TCFLIVEHNW (223 aa)) are Cytoplasmic-facing. Residues 1105 to 1146 (NLNTEDVSSESDPEGSKDKLDDTSSSEGSTIDIKPEVEEVPV) form a disordered region. Residues 1178 to 1493 (LGKSWWILRK…KKYYNAMKKL (316 aa)) form an III repeat. The chain crosses the membrane as a helical span at residues 1198–1215 (FETFIIFMILLSSGALAF). The Extracellular portion of the chain corresponds to 1216-1228 (EDIYIEQRKTIRT). A helical transmembrane segment spans residues 1229 to 1247 (ILEYADKVFTYIFILEMLL). Topologically, residues 1248–1261 (KWTAYGFVKFFTNA) are cytoplasmic. Residues 1262 to 1280 (WCWLDFLIVAVSLVSLIAN) form a helical membrane-spanning segment. Residues 1281 to 1288 (ALGYSELG) are Extracellular-facing. The chain crosses the membrane as a helical span at residues 1289 to 1307 (AIKSLRTLRALRPLRALSR). Residues 1308–1324 (FEGMRVVVNALVGAIPS) are Cytoplasmic-facing. The chain crosses the membrane as a helical span at residues 1325–1344 (IMNVLLVCLIFWLIFSIMGV). The Extracellular segment spans residues 1345-1397 (NLFAGKYHYCFNETSEIRFEIDEVNNKTDCEKLMEGNNTEIRWKNVKINFDNV). Cysteines 1354 and 1374 form a disulfide. N-linked (GlcNAc...) asparagine glycans are attached at residues N1356, N1370, and N1381. Residues 1398-1419 (GAGYLALLQVATFKGWMDIMYA) constitute an intramembrane region (pore-forming). Residues 1420–1436 (AVDSRKPDEQPDYEGNI) lie on the Extracellular side of the membrane. A helical transmembrane segment spans residues 1437–1458 (YMYIYFVIFIIFGSFFTLNLFI). Topologically, residues 1459–1521 (GVIIDNFNQQ…IVFDFVTQQA (63 aa)) are cytoplasmic. S1495 bears the Phosphoserine; by PKC mark. An IV repeat occupies 1502–1799 (IPRPLNKIQG…WEKFDPDATQ (298 aa)). A helical transmembrane segment spans residues 1522-1539 (FDIVIMMLICLNMVTMMV). Residues 1540 to 1550 (ETDTQSKQMEN) lie on the Extracellular side of the membrane. A helical transmembrane segment spans residues 1551–1569 (ILYWINLVFVIFFTCECVL). The Cytoplasmic segment spans residues 1570 to 1581 (KMFALRHYYFTI). A helical membrane pass occupies residues 1582 to 1599 (GWNIFDFVVVILSIVGMF). Topologically, residues 1600–1612 (LADIIEKYFVSPT) are extracellular. The chain crosses the membrane as a helical span at residues 1613–1629 (LFRVIRLARIGRILRLI). The Cytoplasmic portion of the chain corresponds to 1630–1648 (KGAKGIRTLLFALMMSLPA). A helical membrane pass occupies residues 1649–1666 (LFNIGLLLFLVMFIFSIF). The Extracellular segment spans residues 1667–1688 (GMSNFAYVKHEAGIDDMFNFET). Residues 1689 to 1711 (FGNSMICLFQITTSAGWDGLLLP) constitute an intramembrane region (pore-forming). Topologically, residues 1712-1740 (ILNRPPDCSLDKEHPGSGFKGDCGNPSVG) are extracellular. A disulfide bond links C1719 and C1734. The helical transmembrane segment at 1741-1763 (IFFFVSYIIISFLIVVNMYIAII) threads the bilayer. Residues 1764 to 1978 (LENFSVATEE…RQKEVRESKC (215 aa)) are Cytoplasmic-facing. The 30-residue stretch at 1893-1922 (EEVSAVVLQRAYRGHLARRGFICRKITSNK) folds into the IQ domain. Residues 1924-1978 (ENGGTHREKKESTPSTASLPSYDSVTKPDKEKQQRAEEGRRERAKRQKEVRESKC) are disordered. The segment covering 1936-1947 (TPSTASLPSYDS) has biased composition (polar residues). The segment covering 1949 to 1978 (TKPDKEKQQRAEEGRRERAKRQKEVRESKC) has biased composition (basic and acidic residues).

This sequence belongs to the sodium channel (TC 1.A.1.10) family. Nav1.6/SCN8A subfamily. In terms of assembly, the voltage-sensitive sodium channel consists of an ion-conducting pore-forming alpha subunit regulated by one or more beta-1 (SCN1B), beta-2 (SCN2B), beta-3 (SCN3B) and/or beta-4 (SCN4B) subunits. Beta-1 (SCN1B) and beta-3 (SCN3B) are non-covalently associated with alpha, while beta-2 (SCN2B) and beta-4 (SCN4B) are covalently linked by disulfide bonds. Interacts with FGF13. Interacts with NEDD4 and NEDD4L. Interacts with FGF14, GBG3, GBB2 and SCN1B. Interacts with TMEM233. Interacts with the conotoxin GVIIJ. Interacts with the scorpion toxin BMK M1. Interacts with CALM1; the interaction modulates the inactivation rate of SCN8A. In terms of processing, may be ubiquitinated by NEDD4L; which would promote its endocytosis. Phosphorylation at Ser-1495 by PKC in a highly conserved cytoplasmic loop slows inactivation of the sodium channel and reduces peak sodium currents. As to expression, expressed in the hippocampus (at protein level). Expressed in brain, cerebellum and spinal cord. Expressed in non-neuronal tissues, such as monocytes/macrophages.

The protein resides in the cell membrane. It localises to the cell projection. The protein localises to the axon. It is found in the cytoplasmic vesicle. Its subcellular location is the podosome. The catalysed reaction is Na(+)(in) = Na(+)(out). Its function is as follows. Pore-forming subunit of a voltage-gated sodium channel complex assuming opened or closed conformations in response to the voltage difference across membranes and through which sodium ions selectively pass along their electrochemical gradient. Contributes to neuronal excitability by regulating action potential threshold and propagation. Functionally, more specifically expressed in non-neuronal cells, could play a role in sodium release from intracellular compartments and participate in the control of podosomes formation and macrophages adhesion and movement. The polypeptide is Sodium channel protein type 8 subunit alpha (Mus musculus (Mouse)).